We begin with the raw amino-acid sequence, 595 residues long: Quinoprotein alcohol dehydrogenase PedH (595 aa).

The signal sequence occupies residues 1–27; it reads MTRSPRRPLFAVSLVLSAMLLAGAAHA. Gln87 contributes to the pyrroloquinoline quinone binding site. The cysteines at positions 131 and 132 are disulfide-linked. 4 residues coordinate pyrroloquinoline quinone: Arg137, Ser181, Gly197, and Gly198. Glu199 is a Pr(3+) binding site. Residue Trp263 participates in pyrroloquinoline quinone binding. Pr(3+) contacts are provided by Asn281, Asp323, and Asp325. Asp323 serves as the catalytic Proton acceptor. Pyrroloquinoline quinone is bound by residues Arg350, Asn417, Trp493, and Ala557.

This sequence belongs to the bacterial PQQ dehydrogenase family. Requires Pr(3+) as cofactor. It depends on Nd(3+) as a cofactor. La(3+) serves as cofactor. The cofactor is Ce(3+). Sm(3+) is required as a cofactor. Requires pyrroloquinoline quinone as cofactor. The disulfide ring formed between the two adjacent cysteine residues Cys-131 and Cys-132 is essential for efficient electron transfer at pH 7 from PedH to its natural electron acceptor cytochrome c550.

Its subcellular location is the periplasm. The catalysed reaction is a primary alcohol + 2 Fe(III)-[cytochrome c] = an aldehyde + 2 Fe(II)-[cytochrome c] + 2 H(+). It carries out the reaction ethanol + 2 Fe(III)-[cytochrome c] = acetaldehyde + 2 Fe(II)-[cytochrome c] + 2 H(+). The enzyme catalyses butan-1-ol + 2 Fe(III)-[cytochrome c] = butanal + 2 Fe(II)-[cytochrome c] + 2 H(+). It catalyses the reaction butan-2-ol + 2 Fe(III)-[cytochrome c] = butan-2-one + 2 Fe(II)-[cytochrome c] + 2 H(+). The catalysed reaction is 2-phenylethanol + 2 Fe(III)-[cytochrome c] = 2-phenylacetaldehyde + 2 Fe(II)-[cytochrome c] + 2 H(+). It carries out the reaction octan-1-ol + 2 Fe(III)-[cytochrome c] = octanal + 2 Fe(II)-[cytochrome c] + 2 H(+). The enzyme catalyses hexan-1-ol + 2 Fe(III)-[cytochrome c] = hexanal + 2 Fe(II)-[cytochrome c] + 2 H(+). It catalyses the reaction cinnamyl alcohol + 2 Fe(III)-[cytochrome c] = cinnamaldehyde + 2 Fe(II)-[cytochrome c] + 2 H(+). The catalysed reaction is farnesol + 2 Fe(III)-[cytochrome c] = farnesal + 2 Fe(II)-[cytochrome c] + 2 H(+). It carries out the reaction an aldehyde + 2 Fe(III)-[cytochrome c] + H2O = a carboxylate + 2 Fe(II)-[cytochrome c] + 3 H(+). The enzyme catalyses acetaldehyde + 2 Fe(III)-[cytochrome c] + H2O = 2 Fe(II)-[cytochrome c] + acetate + 3 H(+). It catalyses the reaction butanal + 2 Fe(III)-[cytochrome c] + H2O = butanoate + 2 Fe(II)-[cytochrome c] + 3 H(+). The catalysed reaction is hexanal + 2 Fe(III)-[cytochrome c] + H2O = hexanoate + 2 Fe(II)-[cytochrome c] + 3 H(+). It carries out the reaction octanal + 2 Fe(III)-[cytochrome c] + H2O = octanoate + 2 Fe(II)-[cytochrome c] + 3 H(+). Alcohol dehydrogenase that catalyzes the oxidation of a range of substrates, including linear and aromatic primary and secondary alcohols, as well as aldehydes, but only in the presence of lanthanides, allowing bacterial growth with a variety of volatile organic compounds (VOCs) as carbon and energy sources. Is also involved in the transcriptional regulation of pedE and pedH, most likely acting as a lanthanide sensory module. Uses a specific inducible cytochrome c550, encoded by the adjacent gene in the locus, as electron acceptor. This chain is Quinoprotein alcohol dehydrogenase PedH, found in Pseudomonas putida (strain ATCC 47054 / DSM 6125 / CFBP 8728 / NCIMB 11950 / KT2440).